A 940-amino-acid chain; its full sequence is Reticulon-3 (940 aa).

Positions 1–24 are enriched in low complexity; that stretch reads MAESSAATQSPSVSSSSSGAEPST. 3 disordered regions span residues 1–32, 71–91, and 129–182; these read MAESSAATQSPSVSSSSSGAEPSTLGGGGGSP, SSEIYNPDPTTPLGSETLGSH, and DIPC…ALDL. Ala-2 carries the N-acetylalanine modification. Topologically, residues 2–771 are cytoplasmic; sequence AESSAATQSP…KKTGFVFGTT (770 aa). Ser-31 bears the Phosphoserine mark. 6 positions are modified to phosphoserine: Ser-196, Ser-204, Ser-209, Ser-212, Ser-249, and Ser-282. 3 disordered regions span residues 314–335, 381–405, and 428–512; these read AKQQADKSPCTTESTGLDRSEH, KGYLSSTKEAGGKGVPDSSQPISGS, and EVTE…LEGQ. A compositionally biased stretch (acidic residues) spans 430–447; the sequence is TEVDSSGESDDTVIEDTT. The span at 472 to 490 shows a compositional bias: basic and acidic residues; it reads TSERENKETTSHETVRSEM. The segment covering 491–512 has biased composition (polar residues); the sequence is YENSEQQQAHAETPTQRSLEGQ. Ser-508 carries the post-translational modification Phosphoserine. At Thr-572 the chain carries Phosphothreonine. Residues Ser-575, Ser-576, and Ser-652 each carry the phosphoserine modification. Disordered stretches follow at residues 623–655 and 672–701; these read NKLSSSETKNTKSKYSEHSRETNGGAPKVSSDL and QVQAERMSPGGKLKRTFDPQSGPQNSSDIL. Residues 689–699 are compositionally biased toward polar residues; the sequence is DPQSGPQNSSD. One can recognise a Reticulon domain in the interval 752 to 940; it reads VHDLIFWRDV…LPGIAKKKAE (189 aa). An intramembrane region (helical) is located at residues 772–795; the sequence is LIMLLSLAAFSVISVVSYLILALL. Residues 796–852 are Cytoplasmic-facing; sequence SVTISFRVYKSVIQAVQKSEEGHPFKAYLDVDITLSSEAFHSYMNAAMVHVNKALKL. Residues 853 to 875 constitute an intramembrane region (helical); the sequence is IIRLFLVEDLVDSLKLAVFMWLM. The Cytoplasmic portion of the chain corresponds to 876–879; sequence TYVG. The segment at residues 880–902 is an intramembrane region (helical); sequence AVFNGITLLILAELLVFSVPIVY. The interval 895–940 is interaction with FADD; sequence VFSVPIVYEKYKTQIDHYVGIARDQTKSIVEKIQAKLPGIAKKKAE. Residues 903 to 940 lie on the Cytoplasmic side of the membrane; the sequence is EKYKTQIDHYVGIARDQTKSIVEKIQAKLPGIAKKKAE. Positions 908–910 are interaction with BACE1; that stretch reads QID.

In terms of assembly, homodimer. Interacts with RTN4. Isoform 2 interacts with BACE1, BACE2, BCL2 and FADD. Interacts with ATL2. Interacts with TMEM33. Interacts with ATL1. Interacts with ZFYVE27 and with KIF5A in a ZFYVE27-dependent manner. Interacts with RIGI. Interacts with TRIM25. In terms of tissue distribution, present in olfactory bulb, olfactory epithelium and retina (at protein level).

The protein localises to the endoplasmic reticulum membrane. It localises to the golgi apparatus membrane. In terms of biological role, may be involved in membrane trafficking in the early secretory pathway. Inhibits BACE1 activity and amyloid precursor protein processing. May induce caspase-8 cascade and apoptosis. May favor BCL2 translocation to the mitochondria upon endoplasmic reticulum stress. Induces the formation of endoplasmic reticulum tubules. Acts also as an inflammation-resolving regulator by interacting with both TRIM25 and RIGI, subsequently impairing RIGI 'Lys-63'-linked polyubiquitination leading to IRF3 and NF-kappa-B inhibition. This is Reticulon-3 (Rtn3) from Rattus norvegicus (Rat).